The sequence spans 69 residues: ATP synthase F(0) complex subunit e, mitochondrial (69 aa).

N6-acetyllysine is present on lysine 34.

Belongs to the ATPase e subunit family. As to quaternary structure, component of the ATP synthase complex composed at least of ATP5F1A/subunit alpha, ATP5F1B/subunit beta, ATP5MC1/subunit c (homooctomer), MT-ATP6/subunit a, MT-ATP8/subunit 8, ATP5ME/subunit e, ATP5MF/subunit f, ATP5MG/subunit g, ATP5MK/subunit k, ATP5MJ/subunit j, ATP5F1C/subunit gamma, ATP5F1D/subunit delta, ATP5F1E/subunit epsilon, ATP5PF/subunit F6, ATP5PB/subunit b, ATP5PD/subunit d, ATP5PO/subunit OSCP. ATP synthase complex consists of a soluble F(1) head domain (subunits alpha(3) and beta(3)) - the catalytic core - and a membrane F(0) domain - the membrane proton channel (subunits c, a, 8, e, f, g, k and j). These two domains are linked by a central stalk (subunits gamma, delta, and epsilon) rotating inside the F1 region and a stationary peripheral stalk (subunits F6, b, d, and OSCP).

It is found in the mitochondrion. The protein resides in the mitochondrion inner membrane. Subunit e, of the mitochondrial membrane ATP synthase complex (F(1)F(0) ATP synthase or Complex V) that produces ATP from ADP in the presence of a proton gradient across the membrane which is generated by electron transport complexes of the respiratory chain. ATP synthase complex consist of a soluble F(1) head domain - the catalytic core - and a membrane F(1) domain - the membrane proton channel. These two domains are linked by a central stalk rotating inside the F(1) region and a stationary peripheral stalk. During catalysis, ATP synthesis in the catalytic domain of F(1) is coupled via a rotary mechanism of the central stalk subunits to proton translocation. In vivo, can only synthesize ATP although its ATP hydrolase activity can be activated artificially in vitro. Part of the complex F(0) domain. In Cricetulus longicaudatus (Long-tailed dwarf hamster), this protein is ATP synthase F(0) complex subunit e, mitochondrial.